The primary structure comprises 199 residues: Probable cobalt-precorrin-6B C(15)-methyltransferase (decarboxylating) (199 aa).

S-adenosyl-L-methionine is bound by residues threonine 24, 48–52 (GCGTG), aspartate 72, and alanine 101.

Belongs to the methyltransferase superfamily. Archaeal-type CbiT family.

It catalyses the reaction Co-precorrin-6B + S-adenosyl-L-methionine = Co-precorrin-7 + S-adenosyl-L-homocysteine + CO2. Its pathway is cofactor biosynthesis; adenosylcobalamin biosynthesis; cob(II)yrinate a,c-diamide from sirohydrochlorin (anaerobic route): step 8/10. Functionally, catalyzes the methylation of C-15 in cobalt-precorrin-6B followed by the decarboxylation of C-12 to form cobalt-precorrin-7. The polypeptide is Probable cobalt-precorrin-6B C(15)-methyltransferase (decarboxylating) (Saccharolobus islandicus (strain L.S.2.15 / Lassen #1) (Sulfolobus islandicus)).